The sequence spans 146 residues: Transcriptional regulator MraZ (146 aa).

SpoVT-AbrB domains are found at residues 6 to 49 (TYDH…TEEE) and 78 to 121 (THEV…DQKS).

Belongs to the MraZ family. As to quaternary structure, forms oligomers.

It is found in the cytoplasm. Its subcellular location is the nucleoid. In Mesoplasma florum (strain ATCC 33453 / NBRC 100688 / NCTC 11704 / L1) (Acholeplasma florum), this protein is Transcriptional regulator MraZ.